The chain runs to 493 residues: Dynein regulatory complex subunit 2 (493 aa).

Coiled-coil stretches lie at residues 99–163 and 253–280; these read DSVI…RKLI and KDEK…ILKG.

Belongs to the DRC2 family. As to quaternary structure, component of the nexin-dynein regulatory complex (N-DRC). Interacts with DRC1.

It localises to the cytoplasm. Its subcellular location is the cytoskeleton. The protein localises to the flagellum basal body. The protein resides in the cell projection. It is found in the cilium. It localises to the flagellum. Its subcellular location is the flagellum axoneme. Component of the nexin-dynein regulatory complex (N-DRC), a key regulator of ciliary/flagellar motility which maintains the alignment and integrity of the distal axoneme and regulates microtubule sliding in motile axonemes. Plays a critical role in the assembly of N-DRC and also stabilizes the assembly of multiple inner dynein arms and radial spokes. Coassembles with DRC1 to form a central scaffold needed for assembly of the N-DRC and its attachment to the outer doublet microtubules. The protein is Dynein regulatory complex subunit 2 (Ccdc65) of Mus musculus (Mouse).